The chain runs to 476 residues: Chromosomal replication initiator protein DnaA (476 aa).

The interval 1-87 (MSDRSDPTHA…AGVSNFAIVV (87 aa)) is domain I, interacts with DnaA modulators. Residues 87-131 (VNPGIAQDAFAQHPEPAEQPYIETPTITAPTDNPGLPASPSRGDS) are domain II. Residues 132 to 348 (RLNPKYGFDT…GTLIRVTAFA (217 aa)) form a domain III, AAA+ region region. 4 residues coordinate ATP: Gly176, Gly178, Lys179, and Thr180. A domain IV, binds dsDNA region spans residues 349–476 (SLNKTPVDLA…IKQNHRYGKM (128 aa)).

This sequence belongs to the DnaA family. Oligomerizes as a right-handed, spiral filament on DNA at oriC.

It localises to the cytoplasm. Functionally, plays an essential role in the initiation and regulation of chromosomal replication. ATP-DnaA binds to the origin of replication (oriC) to initiate formation of the DNA replication initiation complex once per cell cycle. Binds the DnaA box (a 9 base pair repeat at the origin) and separates the double-stranded (ds)DNA. Forms a right-handed helical filament on oriC DNA; dsDNA binds to the exterior of the filament while single-stranded (ss)DNA is stabiized in the filament's interior. The ATP-DnaA-oriC complex binds and stabilizes one strand of the AT-rich DNA unwinding element (DUE), permitting loading of DNA polymerase. After initiation quickly degrades to an ADP-DnaA complex that is not apt for DNA replication. Binds acidic phospholipids. This is Chromosomal replication initiator protein DnaA from Clavibacter sepedonicus (Clavibacter michiganensis subsp. sepedonicus).